A 118-amino-acid chain; its full sequence is NADPH-dependent 7-cyano-7-deazaguanine reductase (118 aa).

C34 (thioimide intermediate) is an active-site residue. D41 functions as the Proton donor in the catalytic mechanism. Substrate contacts are provided by residues 56 to 58 and 75 to 76; these read VEL and HE.

The protein belongs to the GTP cyclohydrolase I family. QueF type 1 subfamily.

The protein localises to the cytoplasm. The enzyme catalyses 7-aminomethyl-7-carbaguanine + 2 NADP(+) = 7-cyano-7-deazaguanine + 2 NADPH + 3 H(+). The protein operates within tRNA modification; tRNA-queuosine biosynthesis. Functionally, catalyzes the NADPH-dependent reduction of 7-cyano-7-deazaguanine (preQ0) to 7-aminomethyl-7-deazaguanine (preQ1). The sequence is that of NADPH-dependent 7-cyano-7-deazaguanine reductase from Halorhodospira halophila (strain DSM 244 / SL1) (Ectothiorhodospira halophila (strain DSM 244 / SL1)).